The sequence spans 375 residues: Saccharopine dehydrogenase [NAD(+), L-lysine-forming] (375 aa).

The L-saccharopine site is built by arginine 18 and lysine 78. Lysine 78 serves as the catalytic Proton acceptor. Catalysis depends on histidine 96, which acts as the Proton donor. Glutamine 101 contributes to the L-saccharopine binding site. Arginine 130 contacts NAD(+). L-saccharopine is bound by residues arginine 131 and phenylalanine 135. NAD(+) contacts are provided by residues glycine 203 to arginine 204, aspartate 227, threonine 231, tyrosine 252, and valine 279. Cysteine 205 and cysteine 250 form a disulfide bridge. Serine 280–aspartate 282 is a binding site for L-saccharopine. Isoleucine 322–leucine 325 contacts NAD(+).

The protein belongs to the AlaDH/PNT family. Monomer.

The catalysed reaction is L-saccharopine + NAD(+) + H2O = L-lysine + 2-oxoglutarate + NADH + H(+). Its pathway is amino-acid biosynthesis; L-lysine biosynthesis via AAA pathway; L-lysine from L-alpha-aminoadipate (fungal route): step 3/3. Functionally, catalyzes the NAD(+)-dependent cleavage of saccharopine to L-lysine and 2-oxoglutarate, the final step in the alpha-aminoadipate (AAA) pathway for lysin biosynthesis. The protein is Saccharopine dehydrogenase [NAD(+), L-lysine-forming] of Emericella nidulans (strain FGSC A4 / ATCC 38163 / CBS 112.46 / NRRL 194 / M139) (Aspergillus nidulans).